The sequence spans 363 residues: 3,4-dihydroxy-2-butanone 4-phosphate synthase (363 aa).

The DHBP synthase stretch occupies residues 1-202 (MSHISPIPEI…ITDLIEYRSR (202 aa)). D-ribulose 5-phosphate is bound by residues 28 to 29 (RE), Asp33, 141 to 145 (RAGHT), and Glu165. Glu29 is a binding site for Mg(2+). Mg(2+) is bound at residue His144. Residues 205–363 (SLLEDMGNAP…EVVGFEEAEK (159 aa)) are GTP cyclohydrolase II-like.

It in the N-terminal section; belongs to the DHBP synthase family. This sequence in the C-terminal section; belongs to the GTP cyclohydrolase II family. Mg(2+) is required as a cofactor. Mn(2+) serves as cofactor.

The enzyme catalyses D-ribulose 5-phosphate = (2S)-2-hydroxy-3-oxobutyl phosphate + formate + H(+). Its pathway is cofactor biosynthesis; riboflavin biosynthesis; 2-hydroxy-3-oxobutyl phosphate from D-ribulose 5-phosphate: step 1/1. Its function is as follows. Catalyzes the conversion of D-ribulose 5-phosphate to formate and 3,4-dihydroxy-2-butanone 4-phosphate. The chain is 3,4-dihydroxy-2-butanone 4-phosphate synthase (ribB) from Neisseria meningitidis serogroup A / serotype 4A (strain DSM 15465 / Z2491).